Here is a 439-residue protein sequence, read N- to C-terminus: Protein translocase subunit SecY (439 aa).

10 consecutive transmembrane segments (helical) span residues 19 to 39, 68 to 88, 116 to 136, 151 to 171, 176 to 196, 216 to 236, 269 to 289, 312 to 332, 373 to 393, and 396 to 416; these read ILFTIFILFVFRLGAHITVPG, YSLFAMGVSPYITASIIVQLL, YITLVLAMAQSIGITAGFQAM, LMIGAILTTGSMVVTWMGEQI, FGSGVSVIIFAGIVSSIPSAV, WLFVIGLVLSAIIIIYVTTFV, VIPVIFAGSITTAPATILQFL, WTGMLFYALLIVLFTFFYSFV, VGALFLGLISIIPIAAQNVWG, and KIVALGGTSLLILIQVAIQAV.

This sequence belongs to the SecY/SEC61-alpha family. As to quaternary structure, component of the Sec protein translocase complex. Heterotrimer consisting of SecY, SecE and SecG subunits. The heterotrimers can form oligomers, although 1 heterotrimer is thought to be able to translocate proteins. Interacts with the ribosome. Interacts with SecDF, and other proteins may be involved. Interacts with SecA.

Its subcellular location is the cell membrane. The central subunit of the protein translocation channel SecYEG. Consists of two halves formed by TMs 1-5 and 6-10. These two domains form a lateral gate at the front which open onto the bilayer between TMs 2 and 7, and are clamped together by SecE at the back. The channel is closed by both a pore ring composed of hydrophobic SecY resides and a short helix (helix 2A) on the extracellular side of the membrane which forms a plug. The plug probably moves laterally to allow the channel to open. The ring and the pore may move independently. The chain is Protein translocase subunit SecY from Lactococcus lactis subsp. lactis (strain IL1403) (Streptococcus lactis).